Consider the following 314-residue polypeptide: MSRPRRRGRDVHGVLLLDKPQGASSNDVLQKVKRIYNANRAGHTGALDPLATGMLPVCLGEATKFSQYLLDSDKRYRVIAKLGQRTDTSDADGQVVEERPVTFSAEQLDAALESFRGETQQVPSMYSALKYQGKKLYEYARQGIDVPREARPITVYELLFIRHEGDELELEVHCSKGTYIRTIIDDLGEKLGCGAHVIYLRRLAVSKYPVDRMVTLEQLRELVEQAETQGISPADLLDPLLMPMDSPASDFPVVNLPLTSSVYFKNGNPVRTTETPQRGLVRVTEGEENKFIGMGEIDDEGRVAPRRLVVEYPL.

His-43 is a substrate binding site. Asp-48 serves as the catalytic Nucleophile. 3 residues coordinate substrate: Tyr-76, Tyr-179, and Leu-200.

The protein belongs to the pseudouridine synthase TruB family. Type 1 subfamily.

It catalyses the reaction uridine(55) in tRNA = pseudouridine(55) in tRNA. Responsible for synthesis of pseudouridine from uracil-55 in the psi GC loop of transfer RNAs. The chain is tRNA pseudouridine synthase B from Enterobacter sp. (strain 638).